The primary structure comprises 359 residues: Fe-S cluster assembly protein DRE2 (359 aa).

Residues 1-159 (MANILLLLHP…LFKKLSSNSN (159 aa)) are N-terminal SAM-like domain. A disordered region spans residues 152–187 (KKLSSNSNNNNNSSSPIGLTDSSAANTDEETDEANV). Residues 155–166 (SSNSNNNNNSSS) are compositionally biased toward low complexity. The linker stretch occupies residues 159–228 (NNNNNSSSPI…DDLIKDSNQL (70 aa)). Polar residues predominate over residues 167–177 (PIGLTDSSAAN). [2Fe-2S] cluster contacts are provided by cysteine 240, cysteine 252, cysteine 255, and cysteine 257. The interval 240–257 (CEIPNGKKRRKACKDCTC) is fe-S binding site A. Residues cysteine 322, cysteine 325, cysteine 333, and cysteine 336 each coordinate [4Fe-4S] cluster. 2 short sequence motifs (cx2C motif) span residues 322–325 (CGSC) and 333–336 (CDGC). Residues 322–336 (CGSCALGDAFRCDGC) form a fe-S binding site B region.

It belongs to the anamorsin family. As to quaternary structure, monomer. Interacts with TAH18. Interacts with MIA40. The cofactor is [2Fe-2S] cluster. It depends on [4Fe-4S] cluster as a cofactor.

It is found in the cytoplasm. It localises to the mitochondrion intermembrane space. Component of the cytosolic iron-sulfur (Fe-S) protein assembly (CIA) machinery required for the maturation of extramitochondrial Fe-S proteins. Part of an electron transfer chain functioning in an early step of cytosolic Fe-S biogenesis, facilitating the de novo assembly of a [4Fe-4S] cluster on the scaffold complex CFD1-NBP35. Electrons are transferred to DRE2 from NADPH via the FAD- and FMN-containing protein TAH18. TAH18-DRE2 are also required for the assembly of the diferric tyrosyl radical cofactor of ribonucleotide reductase (RNR), probably by providing electrons for reduction during radical cofactor maturation in the catalytic small subunit RNR2. This chain is Fe-S cluster assembly protein DRE2, found in Scheffersomyces stipitis (strain ATCC 58785 / CBS 6054 / NBRC 10063 / NRRL Y-11545) (Yeast).